The chain runs to 170 residues: Large ribosomal subunit protein bL17 (170 aa).

The protein belongs to the bacterial ribosomal protein bL17 family. In terms of assembly, part of the 50S ribosomal subunit. Contacts protein L32.

The chain is Large ribosomal subunit protein bL17 from Azobacteroides pseudotrichonymphae genomovar. CFP2.